Reading from the N-terminus, the 372-residue chain is tRNA-specific 2-thiouridylase MnmA (372 aa).

ATP-binding positions include 16-23 (GMSGGVDS) and methionine 42. The interval 102 to 104 (NPD) is interaction with target base in tRNA. Cysteine 107 (nucleophile) is an active-site residue. Cysteine 107 and cysteine 205 are joined by a disulfide. Glycine 132 lines the ATP pocket. An interaction with tRNA region spans residues 155 to 157 (KDQ). The active-site Cysteine persulfide intermediate is cysteine 205. The tract at residues 317 to 318 (RY) is interaction with tRNA.

This sequence belongs to the MnmA/TRMU family.

It is found in the cytoplasm. It catalyses the reaction S-sulfanyl-L-cysteinyl-[protein] + uridine(34) in tRNA + AH2 + ATP = 2-thiouridine(34) in tRNA + L-cysteinyl-[protein] + A + AMP + diphosphate + H(+). Functionally, catalyzes the 2-thiolation of uridine at the wobble position (U34) of tRNA, leading to the formation of s(2)U34. This chain is tRNA-specific 2-thiouridylase MnmA, found in Shewanella sp. (strain W3-18-1).